We begin with the raw amino-acid sequence, 84 residues long: Small ribosomal subunit protein uS17 (84 aa).

Belongs to the universal ribosomal protein uS17 family. Part of the 30S ribosomal subunit.

Functionally, one of the primary rRNA binding proteins, it binds specifically to the 5'-end of 16S ribosomal RNA. This Yersinia enterocolitica serotype O:8 / biotype 1B (strain NCTC 13174 / 8081) protein is Small ribosomal subunit protein uS17.